The sequence spans 544 residues: MGSDGSSLSPKVSQPGHTEIVDHVSEKVITNGKNVNKKVNAEVDGKSMVEKVKTHEENAEDYHYGGYHPVYIGEEFHHRRYVVERKLGWGHFSTVWLAYDRAAKRRVALKVVRSAEHYRETSIDEIRILQKIREGDEKHLGKKHIISLLDYFVHRGPNGAHVCMVFEVLGENLLSLIQSYGHRGVPVGIVKQIAYQLLIALDYLHRECGIIHTDLKPENVLICIDQDALQHIEAPATTSSPTSNTSSSKTRNNTGYTAKAPIIKRGQSVDNSAQERKTFAKNPTKNSKPAGQVIPSSPFTSTLSRFPSLEGAVSEISLRDSQKHNSHPNSPFSSGDNSLILDGVNGSQEPVPKITVKIADLGNACWTRKHFTNDVQTRQYRSPEVILGCRWGASADCWSFACIIFELLTGDYLFDPRNGNSYSKEDDHIAQIIELLVNYPKQMALSGKHSRDLFNRRGELRNIHKLKFWPLKDVLEQKYHFSAELAQQISDFLSPMLCFDPAKRTNAGYMSNSPWLREVADPTFKIETTGATGEDVPGWATEIR.

In terms of domain architecture, Protein kinase spans 81-516 (YVVERKLGWG…AGYMSNSPWL (436 aa)). ATP contacts are provided by residues 87–95 (LGWGHFSTV) and Lys110. Asp214 functions as the Proton acceptor in the catalytic mechanism. Disordered regions lie at residues 235 to 299 (PATT…SSPF) and 316 to 341 (ISLR…SLIL). A compositionally biased stretch (low complexity) spans 237–254 (TTSSPTSNTSSSKTRNNT). 2 stretches are compositionally biased toward polar residues: residues 281–299 (KNPT…SSPF) and 327–337 (HPNSPFSSGDN).

The protein belongs to the protein kinase superfamily. Ser/Thr protein kinase family. Post-translationally, phosphorylated on Ser residue(s).

It is found in the cytoplasm. It localises to the nucleus. It catalyses the reaction L-seryl-[protein] + ATP = O-phospho-L-seryl-[protein] + ADP + H(+). It carries out the reaction L-threonyl-[protein] + ATP = O-phospho-L-threonyl-[protein] + ADP + H(+). Its function is as follows. May play an important role in mitotic control by altering cellular location, degree of phosphorylation and kinase activity. Abundant expression accelerates the exit when cells are in M-phase and also delays the entry into mitosis when cells are in G2. Phosphorylates prp2 in vitro and so may have a role in co-ordinating pre-mRNA splicing with the progression of the cell division cycle. The sequence is that of Protein kinase dsk1 (dsk1) from Schizosaccharomyces pombe (strain 972 / ATCC 24843) (Fission yeast).